Here is a 509-residue protein sequence, read N- to C-terminus: 2-isopropylmalate synthase (509 aa).

The 263-residue stretch at 5–267 (IQIFDTTLRD…QTALNLEETK (263 aa)) folds into the Pyruvate carboxyltransferase domain. Residues D14, H202, H204, and N238 each contribute to the Mn(2+) site. The interval 391 to 509 (KLETLQLQYV…AAENVEKVGN (119 aa)) is regulatory domain.

Belongs to the alpha-IPM synthase/homocitrate synthase family. LeuA type 1 subfamily. As to quaternary structure, homodimer. Mn(2+) serves as cofactor.

It localises to the cytoplasm. It carries out the reaction 3-methyl-2-oxobutanoate + acetyl-CoA + H2O = (2S)-2-isopropylmalate + CoA + H(+). Its pathway is amino-acid biosynthesis; L-leucine biosynthesis; L-leucine from 3-methyl-2-oxobutanoate: step 1/4. Functionally, catalyzes the condensation of the acetyl group of acetyl-CoA with 3-methyl-2-oxobutanoate (2-ketoisovalerate) to form 3-carboxy-3-hydroxy-4-methylpentanoate (2-isopropylmalate). This Staphylococcus aureus (strain MW2) protein is 2-isopropylmalate synthase.